We begin with the raw amino-acid sequence, 491 residues long: UDP-N-acetylmuramate--L-alanine ligase (491 aa).

126–132 (GTHGKTT) serves as a coordination point for ATP.

It belongs to the MurCDEF family.

The protein resides in the cytoplasm. The enzyme catalyses UDP-N-acetyl-alpha-D-muramate + L-alanine + ATP = UDP-N-acetyl-alpha-D-muramoyl-L-alanine + ADP + phosphate + H(+). It functions in the pathway cell wall biogenesis; peptidoglycan biosynthesis. Cell wall formation. The sequence is that of UDP-N-acetylmuramate--L-alanine ligase from Salmonella gallinarum (strain 287/91 / NCTC 13346).